A 580-amino-acid polypeptide reads, in one-letter code: Arginine--tRNA ligase (580 aa).

The short motif at Ala-131–His-141 is the 'HIGH' region element.

The protein belongs to the class-I aminoacyl-tRNA synthetase family. Monomer.

It localises to the cytoplasm. The catalysed reaction is tRNA(Arg) + L-arginine + ATP = L-arginyl-tRNA(Arg) + AMP + diphosphate. This is Arginine--tRNA ligase from Cereibacter sphaeroides (strain ATCC 17029 / ATH 2.4.9) (Rhodobacter sphaeroides).